Consider the following 257-residue polypeptide: Major prion protein (257 aa).

Positions 1–24 (MVKSHIGSWLLVLFVATWSDIGFC) are cleaved as a signal peptide. The interval 25–234 (KKRPKPGGGW…ESEAYYQRGA (210 aa)) is interaction with GRB2, ERI3 and SYN1. Residues 27–114 (RPKPGGGWNT…KPSKPKTNMK (88 aa)) are disordered. 5 tandem repeats follow at residues 54-62 (PQGGGGWGQ), 63-70 (PHGGGWGQ), 71-78 (PHGGGWGQ), 79-86 (PHGGGWGQ), and 87-95 (PHGGGGWGQ). A 5 X 8 AA tandem repeats of P-H-G-G-G-W-G-Q region spans residues 54–95 (PQGGGGWGQPHGGGWGQPHGGGWGQPHGGGWGQPHGGGGWGQ). Gly residues predominate over residues 55–101 (QGGGGWGQPHGGGWGQPHGGGWGQPHGGGWGQPHGGGGWGQGGGSHG). Residues His-64, Gly-65, Gly-66, His-72, Gly-73, Gly-74, His-80, Gly-81, Gly-82, His-88, Gly-90, and Gly-91 each coordinate Cu(2+). Cys-183 and Cys-218 are oxidised to a cystine. Asn-185 and Asn-201 each carry an N-linked (GlcNAc...) asparagine glycan. Ala-234 carries the GPI-anchor amidated alanine lipid modification. Residues 235–257 (SAILFSPPPVILLISLLILLIVG) constitute a propeptide, removed in mature form.

Belongs to the prion family. Monomer and homodimer. Has a tendency to aggregate into amyloid fibrils containing a cross-beta spine, formed by a steric zipper of superposed beta-strands. Soluble oligomers may represent an intermediate stage on the path to fibril formation. Copper binding may promote oligomerization. Interacts with GRB2, APP, ERI3/PRNPIP and SYN1. Mislocalized cytosolically exposed PrP interacts with MGRN1; this interaction alters MGRN1 subcellular location and causes lysosomal enlargement. Interacts with KIAA1191.

The protein resides in the cell membrane. The protein localises to the golgi apparatus. Functionally, its primary physiological function is unclear. Has cytoprotective activity against internal or environmental stresses. May play a role in neuronal development and synaptic plasticity. May be required for neuronal myelin sheath maintenance. May play a role in iron uptake and iron homeostasis. Soluble oligomers are toxic to cultured neuroblastoma cells and induce apoptosis (in vitro). Association with GPC1 (via its heparan sulfate chains) targets PRNP to lipid rafts. Also provides Cu(2+) or Zn(2+) for the ascorbate-mediated GPC1 deaminase degradation of its heparan sulfate side chains. This is Major prion protein (PRNP) from Mustela putorius furo (European domestic ferret).